The sequence spans 140 residues: MPDPNRVLAGKKATLHNPNVSQQAKERAEDYIESHSSGQETGDYSAQAGGRDLDYEDLGDYDEDADFDNEEGLNVLGDESGFVDDPMKTGDLVEEDQLEGKNIENVRGGYKATMHNPNVSKQAKTRAQRALEEIDDETQA.

Disordered regions lie at residues 1-88 (MPDP…DPMK) and 110-140 (YKATMHNPNVSKQAKTRAQRALEEIDDETQA). A compositionally biased stretch (basic and acidic residues) spans 24-33 (AKERAEDYIE). The span at 34–44 (SHSSGQETGDY) shows a compositional bias: polar residues. Residues 54–71 (DYEDLGDYDEDADFDNEE) are compositionally biased toward acidic residues.

The protein belongs to the UPF0654 (con-6) family.

The chain is UPF0654 protein C22G7.11c from Schizosaccharomyces pombe (strain 972 / ATCC 24843) (Fission yeast).